The primary structure comprises 349 residues: ATPase GET3 (349 aa).

27-34 provides a ligand contact to ATP; that stretch reads KGGVGKTT. Asp58 is an active-site residue. The ATP site is built by Glu240 and Asn267. Residues Cys280 and Cys283 each coordinate Zn(2+).

This sequence belongs to the arsA ATPase family. As to quaternary structure, homodimer. Component of the Golgi to ER traffic (GET) complex, which is composed of GET1, GET2 and GET3. Within the complex, GET1 and GET2 form a heterotetramer which is stabilized by phosphatidylinositol binding and which binds to the GET3 homodimer. Interacts with the chloride channel protein GEF1.

Its subcellular location is the cytoplasm. It localises to the endoplasmic reticulum. The protein resides in the golgi apparatus. ATPase required for the post-translational delivery of tail-anchored (TA) proteins to the endoplasmic reticulum. Recognizes and selectively binds the transmembrane domain of TA proteins in the cytosol. This complex then targets to the endoplasmic reticulum by membrane-bound receptors GET1 and GET2, where the tail-anchored protein is released for insertion. This process is regulated by ATP binding and hydrolysis. ATP binding drives the homodimer towards the closed dimer state, facilitating recognition of newly synthesized TA membrane proteins. ATP hydrolysis is required for insertion. Subsequently, the homodimer reverts towards the open dimer state, lowering its affinity for the GET1-GET2 receptor, and returning it to the cytosol to initiate a new round of targeting. Cooperates with the HDEL receptor ERD2 to mediate the ATP-dependent retrieval of resident ER proteins that contain a C-terminal H-D-E-L retention signal from the Golgi to the ER. Involved in low-level resistance to the oxyanions arsenite and arsenate, and in heat tolerance. In Eremothecium gossypii (strain ATCC 10895 / CBS 109.51 / FGSC 9923 / NRRL Y-1056) (Yeast), this protein is ATPase GET3.